The chain runs to 121 residues: Large ribosomal subunit protein uL18 (121 aa).

It belongs to the universal ribosomal protein uL18 family. In terms of assembly, part of the 50S ribosomal subunit; part of the 5S rRNA/L5/L18/L25 subcomplex. Contacts the 5S and 23S rRNAs.

This is one of the proteins that bind and probably mediate the attachment of the 5S RNA into the large ribosomal subunit, where it forms part of the central protuberance. This chain is Large ribosomal subunit protein uL18, found in Streptococcus suis (strain 98HAH33).